The chain runs to 310 residues: Ribosomal RNA small subunit methyltransferase H (310 aa).

S-adenosyl-L-methionine contacts are provided by residues glycine 47–histidine 49, aspartate 66, phenylalanine 93, aspartate 108, and glutamine 115.

It belongs to the methyltransferase superfamily. RsmH family.

It localises to the cytoplasm. The enzyme catalyses cytidine(1402) in 16S rRNA + S-adenosyl-L-methionine = N(4)-methylcytidine(1402) in 16S rRNA + S-adenosyl-L-homocysteine + H(+). Functionally, specifically methylates the N4 position of cytidine in position 1402 (C1402) of 16S rRNA. The sequence is that of Ribosomal RNA small subunit methyltransferase H from Prochlorococcus marinus (strain MIT 9303).